We begin with the raw amino-acid sequence, 426 residues long: Lipase 7 (426 aa).

Residues 1 to 15 form the signal peptide; sequence MFVFLALITLTTCLQ. 3 N-linked (GlcNAc...) asparagine glycosylation sites follow: asparagine 74, asparagine 175, and asparagine 179. Cystine bridges form between cysteine 108-cysteine 269 and cysteine 341-cysteine 385. Serine 190 (charge relay system) is an active-site residue. The N-linked (GlcNAc...) asparagine glycan is linked to asparagine 223. Histidine 358 (charge relay system) is an active-site residue. N-linked (GlcNAc...) asparagine glycans are attached at residues asparagine 378, asparagine 379, asparagine 422, and asparagine 423.

The protein belongs to the AB hydrolase superfamily. Lipase family. Class Lip subfamily.

It catalyses the reaction a triacylglycerol + H2O = a diacylglycerol + a fatty acid + H(+). Secreted lipase that is able to hydrolze both the neutral triacylglycerols and the monopalmitate ester Tween 40, allowing the use of hydrolyzed products as carbon sources. Has broad lipolytic activity, which may be important for colonization and subsequent infection, therefore contributing to the persistence and virulence in human tissue. The protein is Lipase 7 of Candida albicans (strain SC5314 / ATCC MYA-2876) (Yeast).